The sequence spans 274 residues: 2,3,4,5-tetrahydropyridine-2,6-dicarboxylate N-succinyltransferase (274 aa).

It belongs to the transferase hexapeptide repeat family.

The protein localises to the cytoplasm. It carries out the reaction (S)-2,3,4,5-tetrahydrodipicolinate + succinyl-CoA + H2O = (S)-2-succinylamino-6-oxoheptanedioate + CoA. It participates in amino-acid biosynthesis; L-lysine biosynthesis via DAP pathway; LL-2,6-diaminopimelate from (S)-tetrahydrodipicolinate (succinylase route): step 1/3. The sequence is that of 2,3,4,5-tetrahydropyridine-2,6-dicarboxylate N-succinyltransferase from Alteromonas mediterranea (strain DSM 17117 / CIP 110805 / LMG 28347 / Deep ecotype).